Consider the following 302-residue polypeptide: Oxygen-dependent coproporphyrinogen-III oxidase (302 aa).

Ser94 provides a ligand contact to substrate. The a divalent metal cation site is built by His98 and His108. The active-site Proton donor is His108. 110–112 provides a ligand contact to substrate; it reads NVR. A divalent metal cation contacts are provided by His147 and His177. The segment at 242–277 is important for dimerization; it reads YVEFNLVYDRGTLFGLQTGGRTESILMSMPPLVRWQ. Residue 260–262 participates in substrate binding; sequence GGR.

It belongs to the aerobic coproporphyrinogen-III oxidase family. In terms of assembly, homodimer. Requires a divalent metal cation as cofactor.

Its subcellular location is the cytoplasm. It carries out the reaction coproporphyrinogen III + O2 + 2 H(+) = protoporphyrinogen IX + 2 CO2 + 2 H2O. It participates in porphyrin-containing compound metabolism; protoporphyrin-IX biosynthesis; protoporphyrinogen-IX from coproporphyrinogen-III (O2 route): step 1/1. Functionally, involved in the heme biosynthesis. Catalyzes the aerobic oxidative decarboxylation of propionate groups of rings A and B of coproporphyrinogen-III to yield the vinyl groups in protoporphyrinogen-IX. The sequence is that of Oxygen-dependent coproporphyrinogen-III oxidase from Shewanella oneidensis (strain ATCC 700550 / JCM 31522 / CIP 106686 / LMG 19005 / NCIMB 14063 / MR-1).